Reading from the N-terminus, the 142-residue chain is Myosin-2 essential light chain (142 aa).

EF-hand domains lie at 2 to 37 (DDLADCREVFAYFDSKGDERISVQQVGDVLRALGQN) and 75 to 110 (HTVEEFVEGLSHFDKEGNGMINVAELRHLLTTLGER).

Myosin is a hexamer of 2 heavy chains and 4 light chains (two regulatory light chains and two essential light chains).

The protein localises to the cytoplasm. The protein resides in the cytoskeleton. Functionally, required for cytokinesis and embryo elongation. May regulate myosin II complex formation and/or the association of myosin with actin. May be involved in the organization of mlc-4 and nmy-2 into bundles. This chain is Myosin-2 essential light chain, found in Caenorhabditis elegans.